The sequence spans 394 residues: Isopentenyl-diphosphate delta-isomerase (394 aa).

10–11 serves as a coordination point for substrate; sequence RK. FMN contacts are provided by residues threonine 67, 68-70, serine 101, and asparagine 129; that span reads GMT. 101–103 is a substrate binding site; it reads SQR. Glutamine 168 serves as a coordination point for substrate. Glutamate 169 provides a ligand contact to Mg(2+). FMN-binding positions include lysine 200, serine 225, threonine 230, 279–281, and 300–301; these read GMR and AL.

It belongs to the IPP isomerase type 2 family. As to quaternary structure, homooctamer. Dimer of tetramers. FMN is required as a cofactor. NADPH serves as cofactor. Requires Mg(2+) as cofactor.

The protein localises to the cytoplasm. It catalyses the reaction isopentenyl diphosphate = dimethylallyl diphosphate. In terms of biological role, involved in the biosynthesis of isoprenoids. Catalyzes the 1,3-allylic rearrangement of the homoallylic substrate isopentenyl (IPP) to its allylic isomer, dimethylallyl diphosphate (DMAPP). This chain is Isopentenyl-diphosphate delta-isomerase, found in Pyrococcus furiosus (strain ATCC 43587 / DSM 3638 / JCM 8422 / Vc1).